A 127-amino-acid chain; its full sequence is Holo-[acyl-carrier-protein] synthase (127 aa).

Mg(2+) contacts are provided by aspartate 8 and glutamate 57.

The protein belongs to the P-Pant transferase superfamily. AcpS family. Requires Mg(2+) as cofactor.

It is found in the cytoplasm. The catalysed reaction is apo-[ACP] + CoA = holo-[ACP] + adenosine 3',5'-bisphosphate + H(+). In terms of biological role, transfers the 4'-phosphopantetheine moiety from coenzyme A to a Ser of acyl-carrier-protein. The polypeptide is Holo-[acyl-carrier-protein] synthase (Hydrogenovibrio crunogenus (strain DSM 25203 / XCL-2) (Thiomicrospira crunogena)).